Reading from the N-terminus, the 294-residue chain is 4-hydroxy-tetrahydrodipicolinate synthase (294 aa).

Thr46 lines the pyruvate pocket. Tyr134 acts as the Proton donor/acceptor in catalysis. Lys163 acts as the Schiff-base intermediate with substrate in catalysis. Ile205 contacts pyruvate.

It belongs to the DapA family. In terms of assembly, homotetramer; dimer of dimers.

The protein resides in the cytoplasm. It catalyses the reaction L-aspartate 4-semialdehyde + pyruvate = (2S,4S)-4-hydroxy-2,3,4,5-tetrahydrodipicolinate + H2O + H(+). It functions in the pathway amino-acid biosynthesis; L-lysine biosynthesis via DAP pathway; (S)-tetrahydrodipicolinate from L-aspartate: step 3/4. In terms of biological role, catalyzes the condensation of (S)-aspartate-beta-semialdehyde [(S)-ASA] and pyruvate to 4-hydroxy-tetrahydrodipicolinate (HTPA). The polypeptide is 4-hydroxy-tetrahydrodipicolinate synthase (Clostridium tetani (strain Massachusetts / E88)).